A 150-amino-acid chain; its full sequence is MKVIFTQDVRGRGQRGQIKEVPDGYAQNYLIKRGLAKQATKAAMSQLKGQQRAEEKHAAEELADAKRMKKILEDDNTVVELSGKAGTDGRMFGSISTKQIATALQKQFDLKIDKRKIELAAPIKALGYVNVPIKLHPEVEAQIRVHIAEK.

It belongs to the bacterial ribosomal protein bL9 family.

In terms of biological role, binds to the 23S rRNA. This Limosilactobacillus reuteri (strain DSM 20016) (Lactobacillus reuteri) protein is Large ribosomal subunit protein bL9.